The chain runs to 118 residues: Large ribosomal subunit protein bL17 (118 aa).

The protein belongs to the bacterial ribosomal protein bL17 family. As to quaternary structure, part of the 50S ribosomal subunit. Contacts protein L32.

This chain is Large ribosomal subunit protein bL17, found in Phytoplasma australiense.